The chain runs to 46 residues: Mu-segestritoxin-Sf1h (46 aa).

4 disulfide bridges follow: cysteine 3–cysteine 19, cysteine 10–cysteine 22, cysteine 18–cysteine 42, and cysteine 24–cysteine 40. A keys region for toxin activity region spans residues 31-33 (RPW).

This sequence belongs to the neurotoxin 16 (SFI) family. In terms of tissue distribution, expressed by the venom gland.

The protein resides in the secreted. Functionally, insecticidal toxin. It inhibits insect voltage-gated sodium channels (Nav) by partially blocking the channel pore in DUM neurons from the American cockroach, not by acting as a gating modifier. The inhibition is only partially reversible after prolonged washout. In vivo, the toxin causes flaccid paralysis followed by death when injected into Heliothis virescens larvae. It also causes uncoordinated movements followed by full paralysis to sheep blowflies (Lucilia cuprina). When the toxin is fused to snowdrop lectin, it is orally active against larvae of the tomato moth (Laconobia oleracea), the rice brown planthopper (Nilaparvata lugens), and the peach-potato aphid (Myzus persicae). The chain is Mu-segestritoxin-Sf1h from Segestria florentina (Tube-web spider).